The chain runs to 361 residues: Cyclic AMP receptor-like protein C (361 aa).

Topologically, residues 1-18 (MGIEESQICNPSDREFLS) are extracellular. A helical transmembrane segment spans residues 19–39 (VDILNIVTSSLSLMGSALTII). Over 40–113 (SYIWKKVRRH…HGTYKQPTSK (74 aa)) the chain is Cytoplasmic. Residues 114 to 134 (LPLLIFMLSIADFFTSFFIII) traverse the membrane as a helical segment. The Extracellular segment spans residues 135 to 166 (SQSYLINNSKSYSTPYSPDLKIHFSPCIILRA). A helical transmembrane segment spans residues 167 to 187 (IIQFFFLSTFFWTTCISYYLF). Residues 188 to 197 (HQLSSPGEEK) lie on the Cytoplasmic side of the membrane. A helical membrane pass occupies residues 198 to 218 (YLLAIFNVVSWGIPFAISMVI). Over 219-238 (TMTNSIVVNSDGWCEVAKPM) the chain is Extracellular. Residues 239–259 (ELSLWFLPLFLCLLVCSIYYF) form a helical membrane-spanning segment. Topologically, residues 260–292 (RLRRLFRSKFEYRLQINDRLKQLDSTISRRLTL) are cytoplasmic. The helical transmembrane segment at 293-313 (YIVVFVICWLPDVIQHFISFF) threads the bilayer. The Extracellular portion of the chain corresponds to 314–318 (SKCTF). Residues 319–339 (FPLLILQNILTPSQGFWNFWI) traverse the membrane as a helical segment. Over 340-361 (YSYTNKIARFTPSNDENKRLLQ) the chain is Cytoplasmic.

Belongs to the G-protein coupled receptor 5 family.

Its subcellular location is the membrane. Functionally, receptor for cAMP. The sequence is that of Cyclic AMP receptor-like protein C (crlC) from Dictyostelium discoideum (Social amoeba).